The chain runs to 120 residues: Ribosome-binding factor A (120 aa).

The protein belongs to the RbfA family. In terms of assembly, monomer. Binds 30S ribosomal subunits, but not 50S ribosomal subunits or 70S ribosomes.

It is found in the cytoplasm. Functionally, one of several proteins that assist in the late maturation steps of the functional core of the 30S ribosomal subunit. Associates with free 30S ribosomal subunits (but not with 30S subunits that are part of 70S ribosomes or polysomes). Required for efficient processing of 16S rRNA. May interact with the 5'-terminal helix region of 16S rRNA. The chain is Ribosome-binding factor A from Buchnera aphidicola subsp. Acyrthosiphon pisum (strain 5A).